A 91-amino-acid chain; its full sequence is Small ribosomal subunit protein bS20 (91 aa).

2 disordered regions span residues 1 to 26 (MALR…RSRK) and 67 to 91 (HKNA…AQQS).

The protein belongs to the bacterial ribosomal protein bS20 family.

Its function is as follows. Binds directly to 16S ribosomal RNA. The polypeptide is Small ribosomal subunit protein bS20 (Deinococcus deserti (strain DSM 17065 / CIP 109153 / LMG 22923 / VCD115)).